The primary structure comprises 45 residues: Phospholipase A2 3 (45 aa).

Ca(2+) contacts are provided by Tyr20, Gly24, and Gly25. An intrachain disulfide couples Cys21 to Cys36. The active site involves His39. Residue Asp40 coordinates Ca(2+).

Ca(2+) serves as cofactor. In terms of tissue distribution, expressed by the venom gland.

It is found in the secreted. The catalysed reaction is a 1,2-diacyl-sn-glycero-3-phosphocholine + H2O = a 1-acyl-sn-glycero-3-phosphocholine + a fatty acid + H(+). Its function is as follows. PLA2 catalyzes the calcium-dependent hydrolysis of the 2-acyl groups in 3-sn-phosphoglycerides. The protein is Phospholipase A2 3 of Bothrops diporus (Chaco lancehead).